Reading from the N-terminus, the 377-residue chain is MSEVFDLTCDLISRPSVTPEDAGCQAMIAARLERVGFTCEHLHYGSVANLWATHGQGAPVLVLLGHTDVVPPGPIEAWTSDPFIPQRREGKLYGRGAADMKGSVAAFVIAAERFLVAHAGHPGTLAILLTSDEEGQAIDGVRKVAETLRQRGQGIDWCLTGEPSSSKRLGDLLRVGRRGSLSATLHVKGVQGHVAYPHQARNPIHLAVPALAALTARHWDDGDESFPSTSLQISNIHAGTGANNVIPGALEVAFNLRYNPHWSAPRLESEIVALLDQHGLDYTLHWHRSGEPFYTPEGKLRRIAREVLERFSGAPPEESTGGGTSDARFIAPLGAQCIEIGPVNASIHQVDEHVCLADLEALPDLYQLLIERLLADH.

His66 provides a ligand contact to Zn(2+). Asp68 is a catalytic residue. Asp99 provides a ligand contact to Zn(2+). The active-site Proton acceptor is Glu133. Zn(2+) is bound by residues Glu134, Glu162, and His348.

This sequence belongs to the peptidase M20A family. DapE subfamily. Homodimer. Zn(2+) serves as cofactor. Requires Co(2+) as cofactor.

The enzyme catalyses N-succinyl-(2S,6S)-2,6-diaminopimelate + H2O = (2S,6S)-2,6-diaminopimelate + succinate. It functions in the pathway amino-acid biosynthesis; L-lysine biosynthesis via DAP pathway; LL-2,6-diaminopimelate from (S)-tetrahydrodipicolinate (succinylase route): step 3/3. Its function is as follows. Catalyzes the hydrolysis of N-succinyl-L,L-diaminopimelic acid (SDAP), forming succinate and LL-2,6-diaminopimelate (DAP), an intermediate involved in the bacterial biosynthesis of lysine and meso-diaminopimelic acid, an essential component of bacterial cell walls. The chain is Succinyl-diaminopimelate desuccinylase from Xylella fastidiosa (strain 9a5c).